Here is a 338-residue protein sequence, read N- to C-terminus: Glycerol-3-phosphate dehydrogenase [NAD(P)+] (338 aa).

Residues Ser-14, Tyr-15, His-35, and Lys-109 each contribute to the NADPH site. 3 residues coordinate sn-glycerol 3-phosphate: Lys-109, Gly-138, and Thr-140. Ala-142 is an NADPH binding site. Sn-glycerol 3-phosphate contacts are provided by Lys-194, Asp-247, Ser-257, Arg-258, and Asn-259. Lys-194 serves as the catalytic Proton acceptor. Arg-258 contacts NADPH. Residues Val-282 and Glu-284 each coordinate NADPH.

Belongs to the NAD-dependent glycerol-3-phosphate dehydrogenase family.

Its subcellular location is the cytoplasm. The enzyme catalyses sn-glycerol 3-phosphate + NAD(+) = dihydroxyacetone phosphate + NADH + H(+). The catalysed reaction is sn-glycerol 3-phosphate + NADP(+) = dihydroxyacetone phosphate + NADPH + H(+). It participates in membrane lipid metabolism; glycerophospholipid metabolism. In terms of biological role, catalyzes the reduction of the glycolytic intermediate dihydroxyacetone phosphate (DHAP) to sn-glycerol 3-phosphate (G3P), the key precursor for phospholipid synthesis. The sequence is that of Glycerol-3-phosphate dehydrogenase [NAD(P)+] from Shewanella oneidensis (strain ATCC 700550 / JCM 31522 / CIP 106686 / LMG 19005 / NCIMB 14063 / MR-1).